A 1676-amino-acid chain; its full sequence is MEDSQRGNASMMSMMDDPFVVSPEGARDPPSTNQYSTFDAQLFNLDASTPAQAKRALEAHLAETERRLEEASKLGTALVEQRKDLEDKLREVEQQQEEGQIGEELRRKLADLEREYNEIGQETARAFLAPKRLAGGDDGHLGTPSMDQKSPLHSALFAGQATNSPSKVSVPSRKSRNQSNRVHDIEFATEISTSLLAQVRQLQSLLAEREETLKTVNLEKSRLELEAEGYAQRIRALDESEERYKDENWALETKIHELMAAVKDVTDRETKLTSSLGAATAEKSAMERELEDLKQANAKLIEDHTAAQKANDAEINTLRRNLSAGDAERLTLQRKLEDMNTQNQELAKAVAMRLRQQEAESTREVVRPHDSEDEEQATPENSPPPSPNKFTPRHNHLETETLRSSLGHAHRMIQNLRSTIHREKTEKIELKRMLQEARDEVEQRRRDSVAANGPTNKRQKTKAETRKPARPDLLGAGRKKAEVEIHDSDWESNAGDISPTHKASNDSRDRRGDQPIDDRSDAYHTATEADDPFETANERETTTESEAFQTGVESMAGDSTDSDELTETEDRVQRTPRGRVSSMTLAKARDRTSYYSTASTSADEGDSTDPGTPSISQFSTPRYRLRKKRSVLRKIRPSGEAPMAFNSRPSSARESPSTSFTRDTSAAPEGQSLFAELAEVDGDEDDFGPPMQFEAASPSTPRMLPGFDSRRPSAVTVELPSKPDMVDSGVMTDPWEPNLHLASQTDDETVISVPVTPDKPTMSDASTGMDVVESPSLVHSSTQWTPLKPNAETSDDHVLSVPTPPKMAWDGQTLNEERKVDIPDSPTTQRELNISSVSFEETEPVAPSFPELRTAFFVGSTTEPVAAPVPVPPEVALSPISSQTTQPTEPVIPAPPEPEPIYVPEMAFSQILVEDTLPILAKLPEPAPERVFAEQGTSTDIAELSVSAISSEQTEPVEPVYEPKQDVAIVAEAVPEGPLSFVEQGTNTDDVEISFPAISSVETEPVAPVRETKDDVPEPVLSLTEQGTSTDTVEFSVSSISSEETEPVEPIREAKEEAAAVDDVASESTHPVLSIFLTPPAYTEPTAPKLQEAVIPPAPQLALSTVSSVETPPVQYTPDVLILPTPPALDENTPPSVMASTAKATKSAPPLVVVDDNTDKGTADGLVTQQNGVTLPLGAISGNAAPRRARSGSSNQADQGAQTILSSKQIDQLLIDRASVRPLSPPDSDKLNEMSNSPFATPKARSRPVPQASNASLHKRPGSAASQASSVQIHPPLPADHKEAIMAAEKKSIDQRPASAGLMGPPLAPASAVRASSQQRPRTPNESALQVGSAKTTTSRASVRRDSHMSRRSSVSSFASELEERFNMQPNPPFAPQGYSTGTDPRMIQAITQTMIGEFLWKYTRRAVSGEISNTRHRRYFWVHPYTRTLYWSEHDPQSAGKSEGRTKSVSIEAVRVVADDNPYPPGLHCKSLEVVSPGRRIRFTATTSQRHETWFNALSYLLVRNGPEDEEAENGVTLDDIDEFNPGFRSRSRQTARMSVSSSQSRGTRGLPKQRSGSAMSLRPSVTPGRASPYPPSHYSDQARQASSSRLSTIFNSTIKGSFGRKGPYAASSLNEDSIHNHDDSVEDLRHMMDRGDDVDRLENVRACCDGKHDVSSLSRTSRYSPRANRIHSHH.

The segment covering 1–11 (MEDSQRGNASM) has biased composition (polar residues). Positions 1 to 35 (MEDSQRGNASMMSMMDDPFVVSPEGARDPPSTNQY) are disordered. A coiled-coil region spans residues 51-127 (AQAKRALEAH…EIGQETARAF (77 aa)). 7 disordered regions span residues 160–180 (QATNSPSKVSVPSRKSRNQSN), 353–394 (RLRQ…TPRH), 439–712 (DEVE…SRRP), 1027–1050 (GTSTDTVEFSVSSISSEETEPVEP), 1176–1201 (PLGAISGNAAPRRARSGSSNQADQGA), 1220–1270 (VRPL…QASS), and 1297–1354 (PASA…RRSS). Residues 163-172 (NSPSKVSVPS) show a composition bias toward low complexity. Coiled-coil stretches lie at residues 193–359 (TSLL…QQEA) and 408–453 (HAHR…AANG). Basic and acidic residues-rich tracts occupy residues 355-370 (RQQEAESTREVVRPHD), 439-448 (DEVEQRRRDS), 461-470 (TKAETRKPAR), 479-489 (KKAEVEIHDSD), and 503-522 (ASNDSRDRRGDQPIDDRSDA). Residues 593–602 (SYYSTASTSA) are compositionally biased toward low complexity. Residues 609-620 (DPGTPSISQFST) are compositionally biased toward polar residues. The segment covering 623–636 (YRLRKKRSVLRKIR) has biased composition (basic residues). Over residues 647–664 (SRPSSARESPSTSFTRDT) the composition is skewed to polar residues. A compositionally biased stretch (acidic residues) spans 678-687 (AEVDGDEDDF). Low complexity predominate over residues 1032 to 1042 (TVEFSVSSISS). A compositionally biased stretch (polar residues) spans 1191–1201 (SGSSNQADQGA). Positions 1314–1341 (RASSQQRPRTPNESALQVGSAKTTTSRA) are enriched in polar residues. Positions 1393-1504 (QTMIGEFLWK…WFNALSYLLV (112 aa)) constitute a PH domain. Positions 1511-1524 (EEAENGVTLDDIDE) are enriched in acidic residues. Disordered regions lie at residues 1511-1589 (EEAE…QASS) and 1654-1676 (HDVSSLSRTSRYSPRANRIHSHH). Polar residues-rich tracts occupy residues 1534-1548 (RQTARMSVSSSQSRG) and 1580-1589 (YSDQARQASS).

It localises to the membrane. Functionally, required for nuclear positioning and completion of asexual development. In Emericella nidulans (strain FGSC A4 / ATCC 38163 / CBS 112.46 / NRRL 194 / M139) (Aspergillus nidulans), this protein is Anucleate primary sterigmata protein A (apsA).